Here is a 418-residue protein sequence, read N- to C-terminus: Gamma-glutamyl phosphate reductase (418 aa).

This sequence belongs to the gamma-glutamyl phosphate reductase family.

The protein localises to the cytoplasm. The enzyme catalyses L-glutamate 5-semialdehyde + phosphate + NADP(+) = L-glutamyl 5-phosphate + NADPH + H(+). It functions in the pathway amino-acid biosynthesis; L-proline biosynthesis; L-glutamate 5-semialdehyde from L-glutamate: step 2/2. Its function is as follows. Catalyzes the NADPH-dependent reduction of L-glutamate 5-phosphate into L-glutamate 5-semialdehyde and phosphate. The product spontaneously undergoes cyclization to form 1-pyrroline-5-carboxylate. This is Gamma-glutamyl phosphate reductase from Chlorobium chlorochromatii (strain CaD3).